Reading from the N-terminus, the 168-residue chain is Phosphopantetheine adenylyltransferase (168 aa).

Substrate is bound at residue Thr10. Residues 10–11 (TF) and His18 each bind ATP. 3 residues coordinate substrate: Lys42, Leu74, and Arg88. Residues 89–91 (GLR), Glu99, and 124–130 (NSFISST) each bind ATP.

Belongs to the bacterial CoaD family. In terms of assembly, homohexamer. Mg(2+) serves as cofactor.

It is found in the cytoplasm. It catalyses the reaction (R)-4'-phosphopantetheine + ATP + H(+) = 3'-dephospho-CoA + diphosphate. It participates in cofactor biosynthesis; coenzyme A biosynthesis; CoA from (R)-pantothenate: step 4/5. In terms of biological role, reversibly transfers an adenylyl group from ATP to 4'-phosphopantetheine, yielding dephospho-CoA (dPCoA) and pyrophosphate. This Shewanella denitrificans (strain OS217 / ATCC BAA-1090 / DSM 15013) protein is Phosphopantetheine adenylyltransferase.